Reading from the N-terminus, the 126-residue chain is UPF0325 protein PBPRA2971 (126 aa).

The protein belongs to the UPF0325 family.

In Photobacterium profundum (strain SS9), this protein is UPF0325 protein PBPRA2971.